The primary structure comprises 480 residues: Uridine/deoxyuridine transporter (480 aa).

14 helical membrane passes run 14–34, 55–75, 93–113, 115–135, 147–167, 174–194, 207–227, 239–259, 280–300, 320–340, 358–378, 382–402, 417–437, and 449–469; these read VGSI…FQLN, SIAL…LFLP, LTMI…LMIG, ILQG…HVKV, ILTS…GWLV, SVFF…SFGT, WTGV…VNAL, WLLA…FWQV, GLLI…NGII, LVTL…SGFL, IIGI…LLLL, FIGI…GIVL, GMFN…PTVL, and ISGI…SFLI.

The protein belongs to the major facilitator superfamily. EmrB family.

The protein resides in the cell membrane. Its function is as follows. Responsible for the uptake of uridine and deoxyuridine. Not involved in purine nucleoside uptake. The sequence is that of Uridine/deoxyuridine transporter from Lactococcus lactis subsp. cremoris (strain MG1363).